A 541-amino-acid chain; its full sequence is Putative apolipoprotein N-acyltransferase (541 aa).

6 helical membrane-spanning segments follow: residues 31 to 51 (PLPA…AAHA), 65 to 85 (GWLF…VSMH), 89 to 109 (GLAA…LALF), 144 to 164 (AACW…FPWL), 181 to 201 (LLGV…LAGL), and 215 to 235 (LAAG…QFSW). Residues 248–511 (VQGNVEQSQK…AGVLPVAVQG (264 aa)) form the CN hydrolase domain. The active-site Proton acceptor is the glutamate 292. Lysine 366 is a catalytic residue. Residue cysteine 416 is the Nucleophile of the active site.

This sequence belongs to the CN hydrolase family. Apolipoprotein N-acyltransferase subfamily.

It localises to the cell inner membrane. The enzyme catalyses N-terminal S-1,2-diacyl-sn-glyceryl-L-cysteinyl-[lipoprotein] + a glycerophospholipid = N-acyl-S-1,2-diacyl-sn-glyceryl-L-cysteinyl-[lipoprotein] + a 2-acyl-sn-glycero-3-phospholipid + H(+). It participates in protein modification; lipoprotein biosynthesis (N-acyl transfer). Its function is as follows. Catalyzes the phospholipid dependent N-acylation of the N-terminal cysteine of apolipoprotein, the last step in lipoprotein maturation. This is Putative apolipoprotein N-acyltransferase from Bordetella parapertussis (strain 12822 / ATCC BAA-587 / NCTC 13253).